The following is a 272-amino-acid chain: NAD kinase (272 aa).

Catalysis depends on D50, which acts as the Proton acceptor. Residues 50-51, 126-127, R152, D154, 165-170, and A189 each bind NAD(+); these read DG, NE, and TAYNKS.

This sequence belongs to the NAD kinase family. The cofactor is a divalent metal cation.

The protein localises to the cytoplasm. It carries out the reaction NAD(+) + ATP = ADP + NADP(+) + H(+). Functionally, involved in the regulation of the intracellular balance of NAD and NADP, and is a key enzyme in the biosynthesis of NADP. Catalyzes specifically the phosphorylation on 2'-hydroxyl of the adenosine moiety of NAD to yield NADP. The chain is NAD kinase from Streptococcus pneumoniae (strain 70585).